The chain runs to 206 residues: Large ribosomal subunit protein eL8 (206 aa).

It belongs to the eukaryotic ribosomal protein eL8 family. As to quaternary structure, component of the large ribosomal subunit.

The protein resides in the cytoplasm. The polypeptide is Large ribosomal subunit protein eL8 (RPL7A) (Encephalitozoon cuniculi (strain GB-M1) (Microsporidian parasite)).